Reading from the N-terminus, the 20-residue chain is Brevinin-1SPd (20 aa).

A disulfide bond links C14 and C20.

In terms of tissue distribution, expressed by the skin glands.

The protein resides in the secreted. Antimicrobial peptide with activity against Gram-negative and Gram-positive bacteria (MIC=13 uM against E.coli, MIC=3 uM against S.aureus) and fungi (MIC=3 uM against C.albicans). Shows hemolytic activity on human erythrocytes (HC(50)=8 uM). The sequence is that of Brevinin-1SPd from Lithobates septentrionalis (Mink frog).